The chain runs to 179 residues: Photosystem I assembly protein Ycf3 (179 aa).

TPR repeat units follow at residues 29–62 (AFSY…EEDP), 66–99 (SYTL…NSNL), and 126–159 (NLEI…APDN).

This sequence belongs to the Ycf3 family.

Its subcellular location is the plastid. The protein resides in the chloroplast thylakoid membrane. Its function is as follows. Essential for the assembly of the photosystem I (PSI) complex. May act as a chaperone-like factor to guide the assembly of the PSI subunits. This Trieres chinensis (Marine centric diatom) protein is Photosystem I assembly protein Ycf3.